A 191-amino-acid chain; its full sequence is Negative modulator of initiation of replication (191 aa).

The tract at residues 96 to 97 is interaction with DNA; that stretch reads AV.

Belongs to the SeqA family. Homodimer. Polymerizes to form helical filaments.

Its subcellular location is the cytoplasm. Functionally, negative regulator of replication initiation, which contributes to regulation of DNA replication and ensures that replication initiation occurs exactly once per chromosome per cell cycle. Binds to pairs of hemimethylated GATC sequences in the oriC region, thus preventing assembly of replication proteins and re-initiation at newly replicated origins. Repression is relieved when the region becomes fully methylated. The sequence is that of Negative modulator of initiation of replication from Shewanella amazonensis (strain ATCC BAA-1098 / SB2B).